The primary structure comprises 174 residues: Chaperonin-like RBCX protein 1, chloroplastic (174 aa).

Residues 1 to 45 (MESSSSLLHHSYLSYLNPKFGKRPLVSYPLMQSSRKCKQTRICSN) constitute a chloroplast transit peptide.

Belongs to the RbcX family. In terms of assembly, homodimer. Interacts with rbcL, atpB and THI1.

Its subcellular location is the plastid. The protein localises to the chloroplast. Functionally, chaperone involved in RuBisCO assembly process. The sequence is that of Chaperonin-like RBCX protein 1, chloroplastic from Arabidopsis thaliana (Mouse-ear cress).